The sequence spans 150 residues: Putative pre-16S rRNA nuclease (150 aa).

It belongs to the YqgF nuclease family.

The protein localises to the cytoplasm. Functionally, could be a nuclease involved in processing of the 5'-end of pre-16S rRNA. This chain is Putative pre-16S rRNA nuclease, found in Syntrophus aciditrophicus (strain SB).